The following is a 179-amino-acid chain: MQRLKSFYLETIIPKLKEEFGYVNSYRVPKLKKIVINRGFDESCQNSKILEVLLNELEIISGQKPIISKAKKAIANFKLKEKMPVGMFLTLRSEKMYSFLDRLINLSLPRIRDFQGINKNCFDGSGNFSFGLSEQSMFPEINFDKMIKVQGLNITIVTTAETNQEAFFLLKELGIPFRD.

It belongs to the universal ribosomal protein uL5 family. As to quaternary structure, part of the 50S ribosomal subunit; contacts the 5S rRNA.

It is found in the plastid. The protein localises to the chloroplast. Binds 5S rRNA, forms part of the central protuberance of the 50S subunit. In Euglena gracilis, this protein is Large ribosomal subunit protein uL5c (rpl5).